We begin with the raw amino-acid sequence, 404 residues long: Argininosuccinate synthase (404 aa).

ATP is bound by residues 10–18 (AYSGGVDTS) and A38. Residue Y89 coordinates L-citrulline. G119 is a binding site for ATP. Residues T121, N125, and D126 each coordinate L-aspartate. N125 contacts L-citrulline. 5 residues coordinate L-citrulline: R129, S177, S186, E262, and Y274.

It belongs to the argininosuccinate synthase family. Type 1 subfamily. In terms of assembly, homotetramer.

The protein localises to the cytoplasm. It catalyses the reaction L-citrulline + L-aspartate + ATP = 2-(N(omega)-L-arginino)succinate + AMP + diphosphate + H(+). It participates in amino-acid biosynthesis; L-arginine biosynthesis; L-arginine from L-ornithine and carbamoyl phosphate: step 2/3. The sequence is that of Argininosuccinate synthase from Prochlorococcus marinus (strain MIT 9515).